Consider the following 432-residue polypeptide: Enolase (432 aa).

The disordered stretch occupies residues Gln-41 to Tyr-64. Residues Glu-52–Tyr-64 show a composition bias toward basic and acidic residues. Gln-168 serves as a coordination point for (2R)-2-phosphoglycerate. Glu-211 functions as the Proton donor in the catalytic mechanism. Mg(2+)-binding residues include Asp-248, Glu-289, and Asp-316. (2R)-2-phosphoglycerate contacts are provided by Lys-341, Arg-370, Ser-371, and Lys-392. Lys-341 functions as the Proton acceptor in the catalytic mechanism.

This sequence belongs to the enolase family. The cofactor is Mg(2+).

Its subcellular location is the cytoplasm. The protein localises to the secreted. It localises to the cell surface. It carries out the reaction (2R)-2-phosphoglycerate = phosphoenolpyruvate + H2O. It participates in carbohydrate degradation; glycolysis; pyruvate from D-glyceraldehyde 3-phosphate: step 4/5. Its function is as follows. Catalyzes the reversible conversion of 2-phosphoglycerate (2-PG) into phosphoenolpyruvate (PEP). It is essential for the degradation of carbohydrates via glycolysis. The polypeptide is Enolase (Synechocystis sp. (strain ATCC 27184 / PCC 6803 / Kazusa)).